We begin with the raw amino-acid sequence, 53 residues long: U13-myrmicitoxin-Tb1a (53 aa).

Residues 1-23 (MKLIYIFSLVAVIAVTMIPGIMG) form the signal peptide. A propeptide spanning residues 24–29 (EAEAEG) is cleaved from the precursor. Lysine 52 is subject to Lysine amide.

In terms of tissue distribution, expressed by the venom gland.

Its subcellular location is the secreted. In vivo, this neurotoxin paralyzes about 70% of blowflies (L.caesar) one hour after intrathoracic injection, when tested at high doses (45 nmol/g). This Tetramorium bicarinatum (Tramp ant) protein is U13-myrmicitoxin-Tb1a.